A 242-amino-acid polypeptide reads, in one-letter code: Venom nerve growth factor 3 (242 aa).

The N-terminal stretch at 1-18 (MSMLCYTLIIAFLIGIWA) is a signal peptide. The propeptide occupies 19 to 125 (APQSEDNVPL…ALNRNIQAKR (107 aa)). Residues 45-69 (HEGLKTSRNTDQRHPAPKKVDDQEP) are disordered. A compositionally biased stretch (basic and acidic residues) spans 46–66 (EGLKTSRNTDQRHPAPKKVDD). 3 disulfides stabilise this stretch: C139/C203, C181/C231, and C191/C233.

This sequence belongs to the NGF-beta family. Homodimer; non-covalently linked. As to expression, expressed by the venom gland.

It localises to the secreted. Functionally, nerve growth factor is important for the development and maintenance of the sympathetic and sensory nervous systems. It stimulates division and differentiation of sympathetic and embryonic sensory neurons as well as basal forebrain cholinergic neurons in the brain. Its relevance in the snake venom is not clear. However, it has been shown to inhibit metalloproteinase-dependent proteolysis of platelet glycoprotein Ib alpha, suggesting a metalloproteinase inhibition to prevent metalloprotease autodigestion and/or protection against prey proteases. Binds a lipid between the two protein chains in the homodimer. The lipid-bound form promotes histamine relase from mouse mast cells, contrary to the lipid-free form. The sequence is that of Venom nerve growth factor 3 from Pseudechis australis (Mulga snake).